Consider the following 357-residue polypeptide: Iron deficiency-induced protein A (357 aa).

The tat-type signal signal peptide spans 1–36; that stretch reads MSESMFSRRDFLLGGTALAGTLLLDSFGDWRRRAEA. Residues histidine 48, tyrosine 49, tyrosine 182, tyrosine 238, and tyrosine 239 each contribute to the Fe cation site.

It belongs to the bacterial solute-binding protein 1 family. Predicted to be exported by the Tat system. The position of the signal peptide cleavage has not been experimentally proven.

The protein localises to the cellular thylakoid membrane. In terms of biological role, plays an important role in protecting the acceptor side of photosystem II (PSII) against oxidative damage, especially under iron-limiting growth conditions. Its function is as follows. May also be part of a periplasmic ABC transporter complex involved in iron import. The protein is Iron deficiency-induced protein A (idiA) of Synechococcus elongatus (strain ATCC 33912 / PCC 7942 / FACHB-805) (Anacystis nidulans R2).